Reading from the N-terminus, the 737-residue chain is MVVFNGLLKIKICEAVSLKPTAWSLRHAVGPRPQTFLLDPYIALNVDDSRIGQTATKQKTNSPAWHDEFVTDVCNGRKIELAVFHDAPIGYDDFVANCTIQFEELLQNGSRHFEDWIDLEPEGKVYVIIDLSGSSGEAPKDNEERVFRERMRPRKRQGAVRRRVHQVNGHKFMATYLRQPTYCSHCRDFIWGVIGKQGYQCQVCTCVVHKRCHELIITKCAGLKKQETPDEVGSQRFSVNMPHKFGIHNYKVPTFCDHCGSLLWGLLRQGLQCKVCKMNVHRRCETNVAPNCGVDARGIAKVLADLGVTPDKITNSGQRRKKLAAGAESPQPASGNSPSEDDRSKSAPTSPCDQELKELENNIRKALSFDNRGEEHRASSSTDGQLASPGENGEVRQGQAKRLGLDEFNFIKVLGKGSFGKVMLAELKGKDEVYAVKVLKKDVILQDDDVDCTMTEKRILALARKHPYLTQLYCCFQTKDRLFFVMEYVNGGDLMFQIQRSRKFDEPRSGFYAAEVTSALMFLHQHGVIYRDLKLDNILLDAEGHSKLADFGMCKEGILNGVTTTTFCGTPDYIAPEILQELEYGPSVDWWALGVLMYEMMAGQPPFEADNEDDLFESILHDDVLYPVWLSKEAVSILKAFMTKNPHKRLGCVAAQNGEDAIKQHPFFKEIDWVLLEQKKMKPPFKPRIKTKRDVNNFDQDFTREEPILTLVDEAIVKQINQEEFKGFSYFGEDLMP.

The C2 domain occupies 1-117; the sequence is MVVFNGLLKI…NGSRHFEDWI (117 aa). S62 carries the post-translational modification Phosphoserine. The Phorbol-ester/DAG-type 1 zinc-finger motif lies at 169-220; that stretch reads GHKFMATYLRQPTYCSHCRDFIWGVIGKQGYQCQVCTCVVHKRCHELIITKC. An Interaction with actin motif is present at residues 223–228; the sequence is LKKQET. T228 is subject to Phosphothreonine. Residue S234 is modified to Phosphoserine. The Phorbol-ester/DAG-type 2 zinc finger occupies 242-292; it reads PHKFGIHNYKVPTFCDHCGSLLWGLLRQGLQCKVCKMNVHRRCETNVAPNC. Residue T309 is modified to Phosphothreonine. Residues 310-356 are disordered; the sequence is PDKITNSGQRRKKLAAGAESPQPASGNSPSEDDRSKSAPTSPCDQEL. 4 positions are modified to phosphoserine: S316, S329, S337, and S346. T349 carries the phosphothreonine modification. A Phosphoserine; by MAPK11 and MAPK14 modification is found at S350. 2 positions are modified to phosphoserine: S368 and S388. The tract at residues 369–398 is disordered; it reads FDNRGEEHRASSSTDGQLASPGENGEVRQG. The Protein kinase domain maps to 408–668; sequence FNFIKVLGKG…EDAIKQHPFF (261 aa). ATP contacts are provided by residues 414–422 and K437; that span reads LGKGSFGKV. D532 (proton acceptor) is an active-site residue. T566 carries the post-translational modification Phosphothreonine; by PDPK1. Positions 669-737 constitute an AGC-kinase C-terminal domain; sequence KEIDWVLLEQ…FSYFGEDLMP (69 aa). T703 and T710 each carry phosphothreonine. A Phosphoserine modification is found at S729.

It belongs to the protein kinase superfamily. AGC Ser/Thr protein kinase family. PKC subfamily. As to quaternary structure, forms a ternary complex with TRIM63 and RACK1/GN2BL1. Can form a complex with PDLIM5 and N-type calcium channel. Interacts with COPB1. Interacts with DGKQ. Interacts with STAT3. Interacts with YWHAB. Interacts with HSP90AB1; promotes functional activation in a heat shock-dependent manner. Interacts (via phorbol-ester/DAG-type 2 domain) with PRPH and VIM. Interacts with NLRP5/MATER. Post-translationally, phosphorylation on Thr-566 by PDPK1 triggers autophosphorylation on Ser-729. Phosphorylation in the hinge domain at Ser-350 by MAPK11 or MAPK14, Ser-346 by GSK3B and Ser-368 by autophosphorylation is required for interaction with YWHAB. In response to growth factors, phosphorylated at Thr-703 and Ser-729 by the mTORC2 complex, promoting autophosphorylation and activation of PRKCE.

Its subcellular location is the cytoplasm. It is found in the cytoskeleton. The protein localises to the cell membrane. It localises to the perinuclear region. The protein resides in the nucleus. It catalyses the reaction L-seryl-[protein] + ATP = O-phospho-L-seryl-[protein] + ADP + H(+). The catalysed reaction is L-threonyl-[protein] + ATP = O-phospho-L-threonyl-[protein] + ADP + H(+). With respect to regulation, novel PKCs (PRKCD, PRKCE, PRKCH and PRKCQ) are calcium-insensitive, but activated by diacylglycerol (DAG) and phosphatidylserine. Three specific sites; Thr-566 (activation loop of the kinase domain), Thr-710 (turn motif) and Ser-729 (hydrophobic region), need to be phosphorylated for its full activation. Functionally, calcium-independent, phospholipid- and diacylglycerol (DAG)-dependent serine/threonine-protein kinase that plays essential roles in the regulation of multiple cellular processes linked to cytoskeletal proteins, such as cell adhesion, motility, migration and cell cycle, functions in neuron growth and ion channel regulation, and is involved in immune response, cancer cell invasion and regulation of apoptosis. Mediates cell adhesion to the extracellular matrix via integrin-dependent signaling, by mediating angiotensin-2-induced activation of integrin beta-1 (ITGB1) in cardiac fibroblasts. Phosphorylates MARCKS, which phosphorylates and activates PTK2/FAK, leading to the spread of cardiomyocytes. Involved in the control of the directional transport of ITGB1 in mesenchymal cells by phosphorylating vimentin (VIM), an intermediate filament (IF) protein. In epithelial cells, associates with and phosphorylates keratin-8 (KRT8), which induces targeting of desmoplakin at desmosomes and regulates cell-cell contact. Phosphorylates IQGAP1, which binds to CDC42, mediating epithelial cell-cell detachment prior to migration. During cytokinesis, forms a complex with YWHAB, which is crucial for daughter cell separation, and facilitates abscission by a mechanism which may implicate the regulation of RHOA. In cardiac myocytes, regulates myofilament function and excitation coupling at the Z-lines, where it is indirectly associated with F-actin via interaction with COPB1. During endothelin-induced cardiomyocyte hypertrophy, mediates activation of PTK2/FAK, which is critical for cardiomyocyte survival and regulation of sarcomere length. Plays a role in the pathogenesis of dilated cardiomyopathy via persistent phosphorylation of troponin I (TNNI3). Involved in nerve growth factor (NFG)-induced neurite outgrowth and neuron morphological change independently of its kinase activity, by inhibition of RHOA pathway, activation of CDC42 and cytoskeletal rearrangement. May be involved in presynaptic facilitation by mediating phorbol ester-induced synaptic potentiation. Phosphorylates gamma-aminobutyric acid receptor subunit gamma-2 (GABRG2), which reduces the response of GABA receptors to ethanol and benzodiazepines and may mediate acute tolerance to the intoxicating effects of ethanol. Upon PMA treatment, phosphorylates the capsaicin- and heat-activated cation channel TRPV1, which is required for bradykinin-induced sensitization of the heat response in nociceptive neurons. Is able to form a complex with PDLIM5 and N-type calcium channel, and may enhance channel activities and potentiates fast synaptic transmission by phosphorylating the pore-forming alpha subunit CACNA1B (CaV2.2). Downstream of TLR4, plays an important role in the lipopolysaccharide (LPS)-induced immune response by phosphorylating and activating TICAM2/TRAM, which in turn activates the transcription factor IRF3 and subsequent cytokines production. In differentiating erythroid progenitors, is regulated by EPO and controls the protection against the TNFSF10/TRAIL-mediated apoptosis, via BCL2. May be involved in the regulation of the insulin-induced phosphorylation and activation of AKT1. Phosphorylates NLRP5/MATER and may thereby modulate AKT pathway activation in cumulus cells. Phosphorylates and activates LRRK1, which phosphorylates RAB proteins involved in intracellular trafficking. The polypeptide is Protein kinase C epsilon type (Prkce) (Rattus norvegicus (Rat)).